The primary structure comprises 179 residues: MAQFSESVDVPDMGRRQFMNLLTFGTVTGVALGALYPVVNYFIPPATGGAGGGTTAKDELGNDVSVSKFLESHNVGDRTLVQGLKGDPTYIVVESKEAITDYGINAVCTHLGCVVPWNAAENKFKCPCHGSQYDATGKVVRGPAPKSLALSHAKTENDKIVLTPWTETDFRTGEEPWWS.

A helical membrane pass occupies residues 21–43 (LLTFGTVTGVALGALYPVVNYFI). Residues 61–162 (GNDVSVSKFL…AKTENDKIVL (102 aa)) enclose the Rieske domain. Residues Cys108, His110, Cys126, and His129 each contribute to the [2Fe-2S] cluster site. An intrachain disulfide couples Cys113 to Cys128.

This sequence belongs to the Rieske iron-sulfur protein family. The 4 large subunits of the cytochrome b6-f complex are cytochrome b6, subunit IV (17 kDa polypeptide, PetD), cytochrome f and the Rieske protein, while the 4 small subunits are PetG, PetL, PetM and PetN. The complex functions as a dimer. Requires [2Fe-2S] cluster as cofactor.

Its subcellular location is the cellular thylakoid membrane. The catalysed reaction is 2 oxidized [plastocyanin] + a plastoquinol + 2 H(+)(in) = 2 reduced [plastocyanin] + a plastoquinone + 4 H(+)(out). Component of the cytochrome b6-f complex, which mediates electron transfer between photosystem II (PSII) and photosystem I (PSI), cyclic electron flow around PSI, and state transitions. The polypeptide is Cytochrome b6-f complex iron-sulfur subunit 1 (Trichormus variabilis (strain ATCC 29413 / PCC 7937) (Anabaena variabilis)).